The chain runs to 495 residues: Fibronectin type III and SPRY domain-containing protein 1 (495 aa).

Positions 4 to 99 (QKESLRKIIT…ALESSEELLE (96 aa)) form a coiled coil. One can recognise a COS domain in the interval 105-162 (LCSSENDSFTQAAKDIKDSVTMAPAFRLSLKAKASDSMNHMMVDFTHERNLLQSITFL). Residues 164 to 268 (VPATPEIHVA…EPVTLETHAF (105 aa)) enclose the Fibronectin type-III domain. Residues 281-476 (LKVEDLSVEW…VQTGLQVPSI (196 aa)) enclose the B30.2/SPRY domain. The interval 306 to 332 (KNRTNSPMHSPARTAMMSPKRAPSARV) is disordered. Ser-490 is subject to Phosphoserine.

As to quaternary structure, oligomerization is required for binding to microtubules.

The protein resides in the cytoplasm. It is found in the cytoskeleton. The protein localises to the microtubule organizing center. It localises to the centrosome. Its subcellular location is the nucleus. The protein resides in the cleavage furrow. Functionally, may be involved in microtubule organization and stabilization. This chain is Fibronectin type III and SPRY domain-containing protein 1 (fsd1), found in Danio rerio (Zebrafish).